An 83-amino-acid polypeptide reads, in one-letter code: Small ribosomal subunit protein bS20 (83 aa).

The protein belongs to the bacterial ribosomal protein bS20 family.

In terms of biological role, binds directly to 16S ribosomal RNA. This is Small ribosomal subunit protein bS20 from Leuconostoc citreum (strain KM20).